We begin with the raw amino-acid sequence, 435 residues long: MNTIEKIRLDPITRIEGEITLPGSKSLSNRALLLAALAKGTTRVTNLLVSDDVEHMLNALQTLGIRYTLSQDKRECIVEGACGALAWQNGLSLFLGNAGTVMRPLAAVLCLKGEVRAEVVLTGEARMQQRPIQHLVDALRQAGANIEYLENQGYPPLAIKNTGLIGGKIQIDGSISSQFLTALLMVAPLAESDMQIEIVGDLVSKPYIDMTLAMMRDFGVVVQNNNYQSFFVQAQQCYLSPGQYWVEGDASSASYFLAAAAIKGKVKVNGIGKNSIQGDRLFADVLAKMGANISWGEDFIQAEKSVLRGIDVDLNHIPDAAITIAIVALFAETETIIRNVYNWRVKETDRLSAMATELRKLGATVEEGQDFIRIQPLALTDFETAEIETYNDHRIAMCFSLIALSNTAVTILDPQCTRKTFPNYFAEFEKLWRKN.

3-phosphoshikimate-binding residues include Lys-25, Ser-26, and Arg-30. Lys-25 provides a ligand contact to phosphoenolpyruvate. Phosphoenolpyruvate contacts are provided by Gly-99 and Arg-130. 3-phosphoshikimate is bound by residues Ser-176, Ser-177, Gln-178, Ser-204, Asp-319, Asn-342, and Lys-346. Residue Gln-178 coordinates phosphoenolpyruvate. Asp-319 (proton acceptor) is an active-site residue. Residues Arg-350, Arg-394, and Lys-419 each contribute to the phosphoenolpyruvate site.

It belongs to the EPSP synthase family. As to quaternary structure, monomer.

It is found in the cytoplasm. The enzyme catalyses 3-phosphoshikimate + phosphoenolpyruvate = 5-O-(1-carboxyvinyl)-3-phosphoshikimate + phosphate. The protein operates within metabolic intermediate biosynthesis; chorismate biosynthesis; chorismate from D-erythrose 4-phosphate and phosphoenolpyruvate: step 6/7. Functionally, catalyzes the transfer of the enolpyruvyl moiety of phosphoenolpyruvate (PEP) to the 5-hydroxyl of shikimate-3-phosphate (S3P) to produce enolpyruvyl shikimate-3-phosphate and inorganic phosphate. The chain is 3-phosphoshikimate 1-carboxyvinyltransferase from Haemophilus ducreyi (strain 35000HP / ATCC 700724).